The chain runs to 116 residues: Ribosome-binding factor A (116 aa).

It belongs to the RbfA family. As to quaternary structure, monomer. Binds 30S ribosomal subunits, but not 50S ribosomal subunits or 70S ribosomes.

The protein resides in the cytoplasm. Its function is as follows. One of several proteins that assist in the late maturation steps of the functional core of the 30S ribosomal subunit. Associates with free 30S ribosomal subunits (but not with 30S subunits that are part of 70S ribosomes or polysomes). Required for efficient processing of 16S rRNA. May interact with the 5'-terminal helix region of 16S rRNA. This Levilactobacillus brevis (strain ATCC 367 / BCRC 12310 / CIP 105137 / JCM 1170 / LMG 11437 / NCIMB 947 / NCTC 947) (Lactobacillus brevis) protein is Ribosome-binding factor A.